A 231-amino-acid chain; its full sequence is 26S proteasome non-ATPase regulatory subunit 10 (231 aa).

ANK repeat units follow at residues glycine 3–threonine 36, aspartate 37–lysine 69, aspartate 70–valine 102, asparagine 103–lysine 135, aspartate 136–glutamine 168, aspartate 169–glutamate 201, and asparagine 202–serine 226.

As to quaternary structure, part of transient complex containing PSMD10, PSMC4, PSMC5 and PAAF1 formed during the assembly of the 26S proteasome. Stays associated throughout the assembly of the PA700/19S RC and is released upon association with the 20S core. Interacts with PSMC4. Interacts with RB1. Interacts with CDK4. Interacts with MDM2. Interacts with RELA. Associates with a CDK4:CCND2 serine/threonine kinase complex. Interacts with ARHGDIA and increases the interaction between ARHGDIA and RHOA, hence promotes ARHGDIA inactivation of RHOA and ROCK.

The protein localises to the cytoplasm. It localises to the nucleus. Its function is as follows. Acts as a chaperone during the assembly of the 26S proteasome, specifically of the PA700/19S regulatory complex (RC). In the initial step of the base subcomplex assembly is part of an intermediate PSMD10:PSMC4:PSMC5:PAAF1 module which probably assembles with a PSMD5:PSMC2:PSMC1:PSMD2 module. Independently of the proteasome, regulates EGF-induced AKT activation through inhibition of the RHOA/ROCK/PTEN pathway, leading to prolonged AKT activation. Plays an important role in RAS-induced tumorigenesis. Functionally, acts as an oncoprotein by being involved in negative regulation of tumor suppressors RB1 and p53/TP53. Overexpression is leading to phosphorylation of RB1 and proteasomal degradation of RB1. Regulates CDK4-mediated phosphorylation of RB1 by competing with CDKN2A for binding with CDK4. Facilitates binding of MDM2 to p53/TP53 and the mono- and polyubiquitination of p53/TP53 by MDM2 suggesting a function in targeting the TP53:MDM2 complex to the 26S proteasome. Involved in p53-independent apoptosis. Involved in regulation of NF-kappa-B by retaining it in the cytoplasm. Binds to the NF-kappa-B component RELA and accelerates its XPO1/CRM1-mediated nuclear export. The protein is 26S proteasome non-ATPase regulatory subunit 10 (Psmd10) of Mus musculus (Mouse).